We begin with the raw amino-acid sequence, 256 residues long: MRVALRVAYDGSRYHGFQYQPDVPTIEGALRKALSELGLELVGYASRTDAGAHARYQVVVVEGDPELAQPDPINARLPKDIRVIAKTEVHEEFDPRRDALRKEYRYFLGPLNRPEAAARAARKLEGKHDFSAFRREDGRNPIITVERCELVEITPNAYVLRVVAPRFLWEMVRRIAGFVWEVGHGLREEGDAEALLSGKFEPSKKPRCLPAEGLILWHIEYDEVRFERTKAWFEDHKVIQLGGRLLLRLPEGAESC.

Asp49 acts as the Nucleophile in catalysis. Residue Tyr104 participates in substrate binding.

Belongs to the tRNA pseudouridine synthase TruA family.

It carries out the reaction uridine(38/39/40) in tRNA = pseudouridine(38/39/40) in tRNA. In terms of biological role, formation of pseudouridine at positions 38, 39 and 40 in the anticodon stem and loop of transfer RNAs. This is tRNA pseudouridine synthase A from Methanopyrus kandleri (strain AV19 / DSM 6324 / JCM 9639 / NBRC 100938).